The sequence spans 263 residues: TLC domain-containing protein 4 (263 aa).

The next 4 membrane-spanning stretches (helical) occupy residues 7 to 27 (LLISVTCISFFTFQLLFYFVS), 53 to 73 (VVSTCHSLVVGIFGLYIFLFD), 90 to 110 (VNIAIASGYLISDLSIIILYW), and 124 to 144 (ASLYAYYLVLKNGVLAYIGNF). The 203-residue stretch at 44–246 (KKKIEWNSRV…ISKGCIKVIS (203 aa)) folds into the TLC domain. Lys165 is modified (N6-acetyllysine). Helical transmembrane passes span 173–193 (IVINGILMTVVFFIVRIASML) and 211–231 (LGVLIQLSWVISCVVLDVMNV).

Belongs to the TLCD4 family.

The protein resides in the membrane. The sequence is that of TLC domain-containing protein 4 from Homo sapiens (Human).